A 254-amino-acid chain; its full sequence is Small ribosomal subunit protein uS3 (254 aa).

Residues 38-106 form the KH type-2 domain; it reads IRKYVLARIP…DVQINIFEIK (69 aa). Over residues 215–238 the composition is skewed to low complexity; it reads NVGNAASGASSSSNNDNASPNQGG. The interval 215 to 254 is disordered; it reads NVGNAASGASSSSNNDNASPNQGGPRRKRGGEGNRKKSNK. Over residues 244–254 the composition is skewed to basic and acidic residues; sequence GGEGNRKKSNK.

It belongs to the universal ribosomal protein uS3 family. Part of the 30S ribosomal subunit. Forms a tight complex with proteins S10 and S14.

Functionally, binds the lower part of the 30S subunit head. Binds mRNA in the 70S ribosome, positioning it for translation. This chain is Small ribosomal subunit protein uS3, found in Cytophaga hutchinsonii (strain ATCC 33406 / DSM 1761 / CIP 103989 / NBRC 15051 / NCIMB 9469 / D465).